The chain runs to 221 residues: UPF0319 protein CGSHiEE_03630 (221 aa).

An N-terminal signal peptide occupies residues Met1–Ala21.

Belongs to the UPF0319 family.

The polypeptide is UPF0319 protein CGSHiEE_03630 (Haemophilus influenzae (strain PittEE)).